The primary structure comprises 75 residues: Small ribosomal subunit protein bS18 (75 aa).

This sequence belongs to the bacterial ribosomal protein bS18 family. As to quaternary structure, part of the 30S ribosomal subunit. Forms a tight heterodimer with protein bS6.

Its function is as follows. Binds as a heterodimer with protein bS6 to the central domain of the 16S rRNA, where it helps stabilize the platform of the 30S subunit. The sequence is that of Small ribosomal subunit protein bS18 from Mycoplasma mycoides subsp. mycoides SC (strain CCUG 32753 / NCTC 10114 / PG1).